We begin with the raw amino-acid sequence, 582 residues long: Proline--tRNA ligase (582 aa).

This sequence belongs to the class-II aminoacyl-tRNA synthetase family. ProS type 1 subfamily. In terms of assembly, homodimer.

It is found in the cytoplasm. The catalysed reaction is tRNA(Pro) + L-proline + ATP = L-prolyl-tRNA(Pro) + AMP + diphosphate. Functionally, catalyzes the attachment of proline to tRNA(Pro) in a two-step reaction: proline is first activated by ATP to form Pro-AMP and then transferred to the acceptor end of tRNA(Pro). As ProRS can inadvertently accommodate and process non-cognate amino acids such as alanine and cysteine, to avoid such errors it has two additional distinct editing activities against alanine. One activity is designated as 'pretransfer' editing and involves the tRNA(Pro)-independent hydrolysis of activated Ala-AMP. The other activity is designated 'posttransfer' editing and involves deacylation of mischarged Ala-tRNA(Pro). The misacylated Cys-tRNA(Pro) is not edited by ProRS. The chain is Proline--tRNA ligase from Mycobacterium tuberculosis (strain CDC 1551 / Oshkosh).